Reading from the N-terminus, the 465-residue chain is GTPase Der (465 aa).

2 consecutive EngA-type G domains span residues P3–G167 and V179–T352. Residues G9–S16, D57–I61, N119–D122, G185–S192, D232–L236, and N297–D300 each bind GTP. The KH-like domain occupies H353–A437.

This sequence belongs to the TRAFAC class TrmE-Era-EngA-EngB-Septin-like GTPase superfamily. EngA (Der) GTPase family. In terms of assembly, associates with the 50S ribosomal subunit.

GTPase that plays an essential role in the late steps of ribosome biogenesis. In Xanthomonas oryzae pv. oryzae (strain MAFF 311018), this protein is GTPase Der.